The chain runs to 345 residues: Nuclear distribution protein nudE-like 1 (345 aa).

Residues 27-190 are a coiled coil; it reads KQTFQEARDE…LAVRERQQEV (164 aa). Residues 56 to 166 are self-association; the sequence is VQAEQRNRDL…LDEKESLLVS (111 aa). Positions 64 to 189 are interaction with KATNB1; the sequence is DLQADNQRLK…ELAVRERQQE (126 aa). The segment at 114–133 is required for interaction with PAFAH1B1; it reads YVRELEQANDDLERAKRATI. The interval 175-345 is interaction with CENPF; the sequence is RDLRQELAVR…SAPGMLPLSV (171 aa). An interaction with YWHAE region spans residues 189 to 256; the sequence is EVTRKSAPSS…SARISALNIV (68 aa). The interval 191–345 is interaction with NEFL; it reads TRKSAPSSPT…SAPGMLPLSV (155 aa). An interaction with KATNA1 region spans residues 195 to 256; the sequence is APSSPTLDCE…SARISALNIV (62 aa). The residue at position 215 (Ser-215) is a Phosphoserine. Residues 217–240 are disordered; sequence PATPVGKGTENSFPSPKAIPNGFG. Position 219 is a phosphothreonine; by CDK1 and MAPK1 (Thr-219). The segment at 227–278 is interaction with DISC1; sequence NSFPSPKAIPNGFGTSPLTPSARISALNIVGDLLRKVGALESKLAACRNFAK. Residue Ser-231 is modified to Phosphoserine. Residue Ser-242 is modified to Phosphoserine; by CDK1. Position 245 is a phosphothreonine; by CDK1 and MAPK1 (Thr-245). The tract at residues 256–291 is required for localization to the centrosome and interaction with dynein, dynactin, tubulin gamma, PCM1 and PCNT; sequence VGDLLRKVGALESKLAACRNFAKDQASRKSYISGNV. The S-palmitoyl cysteine; by ZDHHC2, ZDHHC3 and ZDHHC7 moiety is linked to residue Cys-273. A disordered region spans residues 316-345; the sequence is AVNGFDPAPPPPGLGSSRPLSAPGMLPLSV. The span at 329–339 shows a compositional bias: low complexity; the sequence is LGSSRPLSAPG. A Phosphoserine modification is found at Ser-344.

It belongs to the nudE family. In terms of assembly, self-associates. Interacts with DISC1, dynein, dynactin, tubulin gamma, KATNA1, KATNB1, microtubules, PAFAH1B1, PCM1, PCNT, and YWHAE. Interacts directly with NEFL and indirectly with NEFH. Interacts (via C-terminus) with CENPF. Interacts with ZNF365. Interacts with PLEKHM1 (via N- and C-terminus). Interacts with GTP-bound RAB9A; the interaction may lead to RAB9A-dynein motor tethering. Post-translationally, phosphorylated in mitosis. Can be phosphorylated by CDK1, CDK5 and MAPK1. Phosphorylation by CDK5 promotes interaction with KATNA1 and YWHAE. Palmitoylation at Cys-273 reduces affinity for dynein. As to expression, expressed at low levels in heart, hypothalamus, liver, lung, spleen and stomach. Expressed at higher levels in testis and brain. Within the brain, expressed in cerebellum, cerebral stem, cortex and striatum.

The protein resides in the cytoplasm. It is found in the cytoskeleton. The protein localises to the microtubule organizing center. Its subcellular location is the centrosome. It localises to the chromosome. The protein resides in the centromere. It is found in the kinetochore. The protein localises to the spindle. Functionally, required for organization of the cellular microtubule array and microtubule anchoring at the centrosome. May regulate microtubule organization at least in part by targeting the microtubule severing protein KATNA1 to the centrosome. Also positively regulates the activity of the minus-end directed microtubule motor protein dynein. May enhance dynein-mediated microtubule sliding by targeting dynein to the microtubule plus ends. Required for several dynein- and microtubule-dependent processes such as the maintenance of Golgi integrity, the centripetal motion of secretory vesicles and the coupling of the nucleus and centrosome. Also required during brain development for the migration of newly formed neurons from the ventricular/subventricular zone toward the cortical plate. Plays a role, together with DISC1, in the regulation of neurite outgrowth. Required for mitosis in some cell types but appears to be dispensible for mitosis in cortical neuronal progenitors, which instead requires NDE1. Facilitates the polymerization of neurofilaments from the individual subunits NEFH and NEFL. Positively regulates lysosome peripheral distribution and ruffled border formation in osteoclasts. Plays a role, together with DISC1, in the regulation of neurite outgrowth. May act as a RAB9A/B effector that tethers RAB9-associated late endosomes to the dynein motor for their retrograde transport to the trans-Golgi network. The sequence is that of Nuclear distribution protein nudE-like 1 (NDEL1) from Oryctolagus cuniculus (Rabbit).